A 308-amino-acid chain; its full sequence is tRNA dimethylallyltransferase 1 (308 aa).

Gly-9 to Thr-16 is an ATP binding site. Substrate is bound at residue Thr-11 to Thr-16. Residues Asp-34–Gln-37 form an interaction with substrate tRNA region.

Belongs to the IPP transferase family. Monomer. Mg(2+) serves as cofactor.

It catalyses the reaction adenosine(37) in tRNA + dimethylallyl diphosphate = N(6)-dimethylallyladenosine(37) in tRNA + diphosphate. Catalyzes the transfer of a dimethylallyl group onto the adenine at position 37 in tRNAs that read codons beginning with uridine, leading to the formation of N6-(dimethylallyl)adenosine (i(6)A). This Bacteroides thetaiotaomicron (strain ATCC 29148 / DSM 2079 / JCM 5827 / CCUG 10774 / NCTC 10582 / VPI-5482 / E50) protein is tRNA dimethylallyltransferase 1.